The primary structure comprises 424 residues: Serine--tRNA ligase (424 aa).

230 to 232 (TAE) lines the L-serine pocket. ATP is bound at residue 261–263 (RSE). Residue Glu284 participates in L-serine binding. 348–351 (EISS) provides a ligand contact to ATP. Ser384 serves as a coordination point for L-serine.

This sequence belongs to the class-II aminoacyl-tRNA synthetase family. Type-1 seryl-tRNA synthetase subfamily. As to quaternary structure, homodimer. The tRNA molecule binds across the dimer.

It is found in the cytoplasm. The enzyme catalyses tRNA(Ser) + L-serine + ATP = L-seryl-tRNA(Ser) + AMP + diphosphate + H(+). It catalyses the reaction tRNA(Sec) + L-serine + ATP = L-seryl-tRNA(Sec) + AMP + diphosphate + H(+). Its pathway is aminoacyl-tRNA biosynthesis; selenocysteinyl-tRNA(Sec) biosynthesis; L-seryl-tRNA(Sec) from L-serine and tRNA(Sec): step 1/1. In terms of biological role, catalyzes the attachment of serine to tRNA(Ser). Is also able to aminoacylate tRNA(Sec) with serine, to form the misacylated tRNA L-seryl-tRNA(Sec), which will be further converted into selenocysteinyl-tRNA(Sec). In Streptococcus pneumoniae serotype 4 (strain ATCC BAA-334 / TIGR4), this protein is Serine--tRNA ligase.